A 465-amino-acid chain; its full sequence is MADDKGQMMWGGRFAATPSAIMEEINASLDIDRRMAEEDVAGSRAHADMLAEMGILSVADNEAIQGGLDAVIEEMRAGTFPFRRELEDIHMNVEARLKELIGEPAGRLHTARSRNDQVITDFRLWTRRALDETGQLVAGLQAMLVRRADENTSTVMPGFTHLQTAQPVTLGHHLLAYVEMLERDRSRLLDCAVRLNECPLGAAALAGTGFPIDRDMTAEALGFARPMANSLDAVSARDFALEALSSLSIAATHLSRLAEEIVLWTSPQFGFARLSDQWSTGSSIMPQKRNPDAAELIRAKASLITGHFSALQGAIKALPLAYAKDLQDDKRLTFDAFDTFNLCVRAMTGMIETISFKPDAMRAAAAKGFSTATDLADWLVRELGMPFRDAHHVTGRIVARAEAKGVDLADLPLKEMQAVHSAITQEVYGVLSVEASAASRTSYGATSPVRVAEQVAQWKQRLRVE.

This sequence belongs to the lyase 1 family. Argininosuccinate lyase subfamily.

The protein resides in the cytoplasm. It catalyses the reaction 2-(N(omega)-L-arginino)succinate = fumarate + L-arginine. Its pathway is amino-acid biosynthesis; L-arginine biosynthesis; L-arginine from L-ornithine and carbamoyl phosphate: step 3/3. This Hyphomonas neptunium (strain ATCC 15444) protein is Argininosuccinate lyase.